Here is a 189-residue protein sequence, read N- to C-terminus: Interferon alpha-H (189 aa).

A signal peptide spans Met-1–Gly-23. 2 disulfide bridges follow: Cys-24/Cys-122 and Cys-52/Cys-162.

The protein belongs to the alpha/beta interferon family.

Its subcellular location is the secreted. Produced by macrophages, IFN-alpha have antiviral activities. Interferon stimulates the production of two enzymes: a protein kinase and an oligoadenylate synthetase. The chain is Interferon alpha-H (IFNAH) from Bos taurus (Bovine).